Reading from the N-terminus, the 872-residue chain is MTSAEIRQKFIDFFKSKGHVHVPSSSLVPHNDPTLLFTNAGMNQFKDTFLGLEKREYTRAVTAQKCVRAGGKHNDLDEVGFTARHHTFFEMLGNFSFGDYFKEDALAYAWEFITSPEWLGLPKDRLWVSIYKDDEQAFDVWHNKVGVPADRIVRLGEKDNFWRMGDTGPCGPCSEIFWDMGPEYACDHPDGCRIDTCGCDRWREFWNNVFMQYNQTPEGLVPLERTGVDTGLGLERMATIMQGVWSNWDIDLWQPIFARIHELSGKKYEGEGPEAVAFRVIADHARCCTFLIADGVRFSNEGRGYVMRRILRRAVRFGRVLGFAEPFIWKVAGAVADVMGDAYPEVRERLPVIQDELRREEERFLRTLEQGMNRLEEILARMRQKGETVISGQDAFVLYDTYGFPLDIVRDVAREQGFTVDEQGYQAAMAEQRARARAARDVSYITEVQSRIAGHLEGVAPTRFVGYTELAGEGRVLAVFDQEGNATGAGEGSSVIIVLDRTPFYAEGGGQVGDTGQIVAPGLRVEVEDCRKLPSGHHLHYGTVQEGFLEVGQQVEARVDARKRKDTQKNHTATHLLHKALREVLGTHVQQAGSLVAPDRLRFDFTHTGPMTPEQIAAVEEMINAEIEAAEPVTWTEMPLDEARALGAMALFGEKYGEIVRVVSVGDGWSRELCGGCHVSNTSEVQYFKILSESGIGGGVRRIEAVTGPGVIRHLEEAQARAVEAQEQLRSRMKEMEKELEQLRAKLAASQTDSLVERAQEVGGVKVVAGTAPVATMEDLRNMTDAIRAKLGSGVVVLGAVTSEGKVNLVAAVTKDLAGRVHAGNLIREVARICGGGGGGRPDMATAGGKNPERLGEALNAVPGLVGSQLGL.

Zn(2+) is bound by residues H571, H575, C674, and H678.

It belongs to the class-II aminoacyl-tRNA synthetase family. Zn(2+) is required as a cofactor.

Its subcellular location is the cytoplasm. It catalyses the reaction tRNA(Ala) + L-alanine + ATP = L-alanyl-tRNA(Ala) + AMP + diphosphate. In terms of biological role, catalyzes the attachment of alanine to tRNA(Ala) in a two-step reaction: alanine is first activated by ATP to form Ala-AMP and then transferred to the acceptor end of tRNA(Ala). Also edits incorrectly charged Ser-tRNA(Ala) and Gly-tRNA(Ala) via its editing domain. This Symbiobacterium thermophilum (strain DSM 24528 / JCM 14929 / IAM 14863 / T) protein is Alanine--tRNA ligase.